A 555-amino-acid polypeptide reads, in one-letter code: Neurofilament light polypeptide (555 aa).

Ser2 is modified (N-acetylserine). The head stretch occupies residues 2–93; it reads SSFSYEPYYS…KSIRTQEKAQ (92 aa). Arg23 bears the Asymmetric dimethylarginine; alternate mark. Arg23 is subject to Omega-N-methylarginine; alternate. Residue Arg30 is modified to Omega-N-methylarginine. Residue Tyr43 is modified to Phosphotyrosine. Residues Ser56, Ser67, and Ser103 each carry the phosphoserine modification. An IF rod domain is found at 90–401; it reads EKAQLQDLND…KLLEGEETRL (312 aa). Positions 94 to 125 are coil 1A; that stretch reads LQDLNDRFASFIERVHELEQQNKVLEAELLVL. The segment at 126–138 is linker 1; that stretch reads RQKHSEPSRFRAL. Residues 139–234 are coil 1B; it reads YEQEIRDLRL…KVHEEEIAEL (96 aa). The linker 12 stretch occupies residues 235–253; sequence QAQIQYAQISVEMDVSSKP. The coil 2A stretch occupies residues 254-272; sequence DLSAALKDIRAQYEKLAAK. Residues 273-281 are linker 2; that stretch reads NMQNAEEWF. The interval 282–397 is coil 2B; it reads KSRFTVLTES…AAYRKLLEGE (116 aa). A tail, subdomain A region spans residues 398–444; it reads ETRLSFTSVGSLTTGYTQSSQVFGRSAYGGLQTSSYLMSARSFPSYY. Residues 398-555 form a tail region; that stretch reads ETRLSFTSVG…GEEQATKKKD (158 aa). The tail, subdomain B (acidic) stretch occupies residues 445-555; the sequence is TSHVQEEQIE…GEEQATKKKD (111 aa). Positions 463–555 are disordered; the sequence is KAEEAKDEPP…GEEQATKKKD (93 aa). Acidic residues predominate over residues 472–540; the sequence is PSEGEAEEEE…ETKEAEEEEK (69 aa). A Phosphoserine modification is found at Ser473. Residue Thr532 is modified to Phosphothreonine. Residues 541–555 are compositionally biased toward basic and acidic residues; sequence KDEGAGEEQATKKKD.

The protein belongs to the intermediate filament family. In terms of assembly, forms homodimers (in vitro). Forms heterodimers with NEFH or NEFM; which can further hetero-oligomerize (in vitro). Forms heterodimers with INA (in vitro). Interacts with ARHGEF28. Interacts with TRIM2. O-glycosylated. In terms of processing, phosphorylated in the head and rod regions by the PKC kinase PKN1, leading to the inhibition of polymerization. Post-translationally, ubiquitinated in the presence of TRIM2 and UBE2D1.

It localises to the cell projection. The protein localises to the axon. The protein resides in the cytoplasm. It is found in the cytoskeleton. In terms of biological role, neurofilaments usually contain three intermediate filament proteins: NEFL, NEFM, and NEFH which are involved in the maintenance of neuronal caliber. May additionally cooperate with the neuronal intermediate filament proteins PRPH and INA to form neuronal filamentous networks. The protein is Neurofilament light polypeptide (NEFL) of Bos taurus (Bovine).